Consider the following 745-residue polypeptide: Arf-GAP with coiled-coil, ANK repeat and PH domain-containing protein 1 (745 aa).

The BAR domain occupies 1–226 (MTVKLDFEEC…RKELGGQLHQ (226 aa)). The segment at 1-382 (MTVKLDFEEC…RGLGQGSGHL (382 aa)) is required for formation of endosomal tubules when overexpressed with PIP5K1C. Positions 265 to 360 (GLVMEGHLFK…WVSAVQSSIA (96 aa)) constitute a PH domain. An Arf-GAP domain is found at 405–527 (GHVAAQVQSV…KFLTKLPEIR (123 aa)). The tract at residues 405-745 (GHVAAQVQSV…SRRSHDLHTL (341 aa)) is required for interaction with GULP1. The C4-type zinc finger occupies 420-443 (CCDCREPAPEWASINLGVTLCIQC). 3'-nitrotyrosine is present on tyrosine 485. Residues 525–567 (EIRGRRGGRGPPRGHPPVPPKPGLIRPKPGSFRSKPEPPSEDL) form a prevents interaction with ITGB1 when S-554 is not phosphorylated region. Residues 525–569 (EIRGRRGGRGPPRGHPPVPPKPGLIRPKPGSFRSKPEPPSEDLQS) form a disordered region. The span at 537–546 (RGHPPVPPKP) shows a compositional bias: pro residues. Serine 555 carries the phosphoserine; by PKB modification. ANK repeat units lie at residues 607–640 (ENATPLIQATAAVRVLNSLLACEFLLQNGANVNQ), 644–673 (QGRGPLHHATILGHTGLACLFLKRGADLGV), and 677–707 (EGRDPLTIAVETANADIVTLLRLAKMREADA).

Banana-shaped homodimer laterally assembling into tetramers, the tetramers further pack helically onto the membrane. Interacts with GTP-bound ARF6. Interacts with third cytoplasmic loop of SLC2A4/GLUT4. Interacts with CLTC. Interacts with GULP1. Forms a complex with GDP-bound ARF6 and GULP1. Interacts with ITGB1; required for ITGB1 recycling. Post-translationally, phosphorylation at Ser-555 by PKB is required for interaction with ITGB1, export of ITGB1 from recycling endosomes to the cell surface and ITGB1-dependent cell migration.

It localises to the recycling endosome membrane. With respect to regulation, GAP activity stimulated by phosphatidylinositol 4,5-bisphosphate (PIP2) and phosphatidic acid. Functionally, GTPase-activating protein (GAP) for ADP ribosylation factor 6 (ARF6) required for clathrin-dependent export of proteins from recycling endosomes to trans-Golgi network and cell surface. Required for regulated export of ITGB1 from recycling endosomes to the cell surface and ITGB1-dependent cell migration. This chain is Arf-GAP with coiled-coil, ANK repeat and PH domain-containing protein 1 (ACAP1), found in Bos taurus (Bovine).